A 709-amino-acid chain; its full sequence is MPSLRQKVTTYFRQLSFIAEPREGRRRASEHEDDDGSFITKYLEGRMQRQFVEGPEIYNGQNPTDMPVLKLDTYEAGNCSITAACTGPDEGLTGIKRSKLHLSTSFADDIDFIDTQQENDDCYGVRRSTPPVQVATQNSTRLTSKFGRPPAGPRRQSSAEQPSGSASASGMRSRKNSKSSIANLAAASAGTDAGKANSDQNNRNVLNAKTEVSTDGDPNSERERLLREAVSNQGGSDPAALIAGVENWRMECDFAYGISVSLYETNMLTKEPMGNPIADCYGMVVRGDSAAMAMADGVNWGDGARLAARSAVHGCLDYLDRAVFGQALECRATTTQEVFVSLLRSLWEGHGCILEVGGALSTLTIAVVLPLDGAPGKYVVCSCNVGDSLGYVYSKKHGVRELTQASHDISSMRDMRDALGALGPADGNKPELSNLTFSMTCIESGDIVFLTSDGISDNFDPVVGKFAEAWTPDVKLQTSGHVKPANLAPKRQNKSASAIYARLHPSTPPTRPARQSKAESPPNNAPSRPKYMRSQTLIEPRQGLVSAPPPSVVPQRIPKSISGLPLVTGPQRHALTLYRLEDLLSYGINGTFSPCVSARRLCHLLIDFVRMITSARRKTLEQRELFYKLSTGPDGAKREVQLNRMQHRAARKRVVDSSAFVALPGKLDHATVMAYTVGGGEEHNNGNENGDGGAISPVLQSKEFKETNF.

Disordered regions lie at residues 121-222 (DCYG…NSER), 503-530 (LHPSTPPTRPARQSKAESPPNNAPSRPK), and 678-709 (GGGEEHNNGNENGDGGAISPVLQSKEFKETNF). Over residues 130-143 (PPVQVATQNSTRLT) the composition is skewed to polar residues. Residues 182–196 (ANLAAASAGTDAGKA) are compositionally biased toward low complexity. The segment covering 197–217 (NSDQNNRNVLNAKTEVSTDGD) has biased composition (polar residues). The region spanning 259 to 503 (SVSLYETNML…KSASAIYARL (245 aa)) is the PPM-type phosphatase domain.

The chain is PP2C-like domain-containing protein CG9801 from Drosophila melanogaster (Fruit fly).